Consider the following 299-residue polypeptide: Tyrosine recombinase XerC (299 aa).

In terms of domain architecture, Core-binding (CB) spans Met1 to Asn85. A Tyr recombinase domain is found at Arg106–Asp285. Catalysis depends on residues Arg146, Lys170, His237, Arg240, and His263. Catalysis depends on Tyr272, which acts as the O-(3'-phospho-DNA)-tyrosine intermediate.

The protein belongs to the 'phage' integrase family. XerC subfamily. Forms a cyclic heterotetrameric complex composed of two molecules of XerC and two molecules of XerD.

It localises to the cytoplasm. In terms of biological role, site-specific tyrosine recombinase, which acts by catalyzing the cutting and rejoining of the recombining DNA molecules. The XerC-XerD complex is essential to convert dimers of the bacterial chromosome into monomers to permit their segregation at cell division. It also contributes to the segregational stability of plasmids. The chain is Tyrosine recombinase XerC from Pseudomonas fluorescens.